We begin with the raw amino-acid sequence, 330 residues long: Peptide transport system ATP-binding protein SapD (330 aa).

The 254-residue stretch at 6 to 259 (IRNLTIEFKT…PHHPYTQALI (254 aa)) folds into the ABC transporter domain. ATP is bound at residue 40-47 (GESGSGKS).

It belongs to the ABC transporter superfamily.

It is found in the cell inner membrane. Involved in a peptide intake transport system that plays a role in the resistance to antimicrobial peptides. The protein is Peptide transport system ATP-binding protein SapD (sapD) of Escherichia coli O157:H7.